Here is an 84-residue protein sequence, read N- to C-terminus: GTP cyclohydrolase 1 feedback regulatory protein (84 aa).

This sequence belongs to the GFRP family. In terms of assembly, homopentamer. Forms a complex with GCH1 where a GCH1 homodecamer is sandwiched by two GFRP homopentamers.

Its subcellular location is the nucleus. The protein resides in the nucleus membrane. It localises to the cytoplasm. It is found in the cytosol. Functionally, mediates tetrahydrobiopterin inhibition of GTP cyclohydrolase 1. The sequence is that of GTP cyclohydrolase 1 feedback regulatory protein (gchfr) from Xenopus laevis (African clawed frog).